A 445-amino-acid chain; its full sequence is ATP-dependent rRNA helicase rrp3 (445 aa).

The segment covering 1-10 (MSKNSSRDSS) has biased composition (basic and acidic residues). Positions 1 to 28 (MSKNSSRDSSPEEVSPDTETPSTTTAPK) are disordered. Positions 17-28 (DTETPSTTTAPK) are enriched in low complexity. The Q motif signature appears at 28-56 (KTFRELGVIDSLCEACEELGYTAPTPIQE). One can recognise a Helicase ATP-binding domain in the interval 59–229 (IPIALEGRDL…RASLSDPVRV (171 aa)). ATP is bound at residue 72–79 (AETGSGKT). The DEAD box motif lies at 178 to 181 (DEAD). One can recognise a Helicase C-terminal domain in the interval 240–400 (KLLQSYLFIP…EYKPEKDEVM (161 aa)). The tract at residues 415 to 445 (LTMRDMQDKDNKGRGPRNRKRTRDDLDQDDG) is disordered.

Belongs to the DEAD box helicase family. DDX47/RRP3 subfamily. As to quaternary structure, interacts with the SSU processome.

It localises to the nucleus. The enzyme catalyses ATP + H2O = ADP + phosphate + H(+). In terms of biological role, ATP-dependent rRNA helicase required for pre-ribosomal RNA processing. Involved in the maturation of the 35S-pre-rRNA and to its cleavage to mature 18S rRNA. The sequence is that of ATP-dependent rRNA helicase rrp3 from Aspergillus terreus (strain NIH 2624 / FGSC A1156).